A 238-amino-acid chain; its full sequence is Modulator of macroautophagy TMEM150B (238 aa).

Residues 1-8 are Cytoplasmic-facing; the sequence is MWNYLSLL. The helical transmembrane segment at 9–29 threads the bilayer; the sequence is PVILFLWAIAGIWIVFAIAVV. Residue Asn30 is glycosylated (N-linked (GlcNAc...) asparagine). Residues 30 to 51 are Extracellular-facing; sequence NGSVDLNEGFPFISICGSYAPQ. A helical membrane pass occupies residues 52-72; sequence SCIFGQVLNIGAALTVWICIV. Topologically, residues 73–86 are cytoplasmic; it reads RHHQLRDWGVKTWQ. A helical membrane pass occupies residues 87–107; the sequence is NQLILWSGILCALGTSIVGNF. The Extracellular portion of the chain corresponds to 108 to 116; sequence QDKNQKPTH. A helical membrane pass occupies residues 117–137; it reads LAGAFLAFILGNLYFWLQFFL. Residues 138-156 lie on the Cytoplasmic side of the membrane; it reads SWWVKGLPQPGPHWIKSLR. Residues 157-177 traverse the membrane as a helical segment; that stretch reads LSLCSLSTILIVAMIVLHALH. The Extracellular portion of the chain corresponds to 178–186; sequence MRSASAICE. The chain crosses the membrane as a helical span at residues 187-207; the sequence is WVVAMLLFMLFGFFAVDFSIL. The Cytoplasmic segment spans residues 208 to 238; sequence RGCTLHLHPRLDSSLPQAPSGSPNIQMAQVL.

It belongs to the DRAM/TMEM150 family.

The protein resides in the cell membrane. Its subcellular location is the endosome membrane. The protein localises to the cytoplasmic vesicle. It is found in the autophagosome membrane. Its function is as follows. Modulator of macroautophagy that causes accumulation of autophagosomes under basal conditions and enhances autophagic flux. Represses cell death and promotes long-term clonogenic survival of cells grown in the absence of glucose in a macroautophagy-independent manner. May have some role in extracellular matrix engulfment or growth factor receptor recycling, both of which can modulate cell survival. The sequence is that of Modulator of macroautophagy TMEM150B from Mus musculus (Mouse).